A 92-amino-acid polypeptide reads, in one-letter code: Defensin-like protein 294 (92 aa).

A signal peptide spans 1–26 (MASRATSLFIFFFLISCTFMLLETNA). 3 cysteine pairs are disulfide-bonded: Cys63–Cys82, Cys69–Cys87, and Cys75–Cys89.

The protein belongs to the DEFL family.

It localises to the secreted. The sequence is that of Defensin-like protein 294 from Arabidopsis thaliana (Mouse-ear cress).